Reading from the N-terminus, the 222-residue chain is Vespryn (222 aa).

Positions M1–Q44 are cleaved as a signal peptide. The propeptide occupies E45–A52. One can recognise a B30.2/SPRY domain in the interval S53–L159. A propeptide spanning residues R160–L222 is cleaved from the precursor. N-linked (GlcNAc...) asparagine glycosylation occurs at N195.

Belongs to the ohanin/vespryn family. Expressed by the venom gland.

The protein localises to the secreted. Its function is as follows. Neurotoxin that produces dose-dependent hypolocomotion and hyperalgesia in mice. May directly act on the central nervous system, as it is 6500-fold more potent when administered intracerebroventricularly than intraperitoneal. The chain is Vespryn from Crotalus adamanteus (Eastern diamondback rattlesnake).